The sequence spans 492 residues: 3-octaprenyl-4-hydroxybenzoate carboxy-lyase (492 aa).

N175 provides a ligand contact to Mn(2+). Prenylated FMN contacts are provided by residues 178–180 (IYR), 192–194 (RWL), and 197–198 (RG). E241 is a binding site for Mn(2+). The active-site Proton donor is D290.

Belongs to the UbiD family. As to quaternary structure, homohexamer. The cofactor is prenylated FMN. Mn(2+) is required as a cofactor.

The protein resides in the cell membrane. It catalyses the reaction a 4-hydroxy-3-(all-trans-polyprenyl)benzoate + H(+) = a 2-(all-trans-polyprenyl)phenol + CO2. It participates in cofactor biosynthesis; ubiquinone biosynthesis. In terms of biological role, catalyzes the decarboxylation of 3-octaprenyl-4-hydroxy benzoate to 2-octaprenylphenol, an intermediate step in ubiquinone biosynthesis. This chain is 3-octaprenyl-4-hydroxybenzoate carboxy-lyase, found in Salmonella choleraesuis (strain SC-B67).